A 104-amino-acid chain; its full sequence is Ig kappa chain V region XP-1 (104 aa).

The interval 1-24 (ADIVMTQTPASVSEPVGGTVTIKC) is framework-1. The complementarity-determining-1 stretch occupies residues 25-35 (QASQSIFBBLA). Residues 36–49 (WYQKPGZPPKGLLY) form a framework-2 region. A complementarity-determining-2 region spans residues 50-56 (TBYTLAS). Residues 57–88 (GVSSRFSGGGSGTBFTLTISDLECABAATYYC) form a framework-3 region. A complementarity-determining-3 region spans residues 89–100 (EXTGVSZBXBKG). The tract at residues 101 to 104 (FGGG) is framework-4.

This chain is Ig kappa chain V region XP-1, found in Oryctolagus cuniculus (Rabbit).